The sequence spans 92 residues: Large ribosomal subunit protein eL31 (92 aa).

The protein belongs to the eukaryotic ribosomal protein eL31 family.

In Halorubrum lacusprofundi (strain ATCC 49239 / DSM 5036 / JCM 8891 / ACAM 34), this protein is Large ribosomal subunit protein eL31.